A 386-amino-acid chain; its full sequence is Lipid-A-disaccharide synthase (386 aa).

It belongs to the LpxB family.

The enzyme catalyses a lipid X + a UDP-2-N,3-O-bis[(3R)-3-hydroxyacyl]-alpha-D-glucosamine = a lipid A disaccharide + UDP + H(+). Its pathway is bacterial outer membrane biogenesis; LPS lipid A biosynthesis. Functionally, condensation of UDP-2,3-diacylglucosamine and 2,3-diacylglucosamine-1-phosphate to form lipid A disaccharide, a precursor of lipid A, a phosphorylated glycolipid that anchors the lipopolysaccharide to the outer membrane of the cell. This Chromobacterium violaceum (strain ATCC 12472 / DSM 30191 / JCM 1249 / CCUG 213 / NBRC 12614 / NCIMB 9131 / NCTC 9757 / MK) protein is Lipid-A-disaccharide synthase.